Here is a 733-residue protein sequence, read N- to C-terminus: Submandibular gland protein C (733 aa).

Residues 1-20 (MKLILLYLAVVLCFVGKARS) form the signal peptide. The tract at residues 48–91 (KSSGGSKDYNLSDGGKSNSRKNLSPATGGSATQQSNLDDSHAPN) is disordered. Asn-57 carries an N-linked (GlcNAc...) asparagine glycan. A compositionally biased stretch (polar residues) spans 62–84 (GKSNSRKNLSPATGGSATQQSNL). 2 N-linked (GlcNAc...) asparagine glycosylation sites follow: Asn-141 and Asn-187. Disordered regions lie at residues 172-204 (GQQAAASGGSKHNVENSSLSTGSATSNKGADKP), 249-330 (LTED…NSSN), 369-450 (LTED…NSSN), and 496-733 (SVTE…PSVA). Residues 186-199 (ENSSLSTGSATSNK) are compositionally biased toward polar residues. The segment covering 256-270 (TSTSASVSGDSSTSS) has biased composition (low complexity). Residues 300–318 (GSKQNVEDSTLSTGSATSN) are compositionally biased toward polar residues. An N-linked (GlcNAc...) asparagine glycan is attached at Asn-327. Over residues 376-390 (TSTSASVSGDSSTSS) the composition is skewed to low complexity. A compositionally biased stretch (polar residues) spans 420–438 (GSKQNVEDSTLSTGSATSN). Residues Asn-447, Asn-514, and Asn-528 are each glycosylated (N-linked (GlcNAc...) asparagine). Composition is skewed to polar residues over residues 496–516 (SVTEASQSAERPNAQSSNNLS) and 525–535 (NPTNGSSSASS). The span at 538–552 (KPYEEGMRKLLKFLE) shows a compositional bias: basic and acidic residues. 2 stretches are compositionally biased toward low complexity: residues 563–574 (SVSGMSSESSRS) and 609–619 (SSNSSTGSATS). The N-linked (GlcNAc...) asparagine glycan is linked to Asn-611. Residues 654–665 (GFNGPEGVGENN) are compositionally biased toward gly residues. The segment covering 677–701 (GSKSDSGSHNLSSGSGSRSNVSTGG) has biased composition (low complexity). N-linked (GlcNAc...) asparagine glycans are attached at residues Asn-686 and Asn-696. Residues 722–733 (TGKTQSGSPSVA) show a composition bias toward polar residues.

In terms of processing, N-glycosylated. In terms of tissue distribution, detected in terminal tubule cells of the submandibular gland (at protein level). Expressed in submandibular salivary glands of 3-day-old males but not adults. Expression in adult submandibular glands is restricted to females. Isoform 5 is expressed in both 3-day-old and adult sublingual glands.

Its subcellular location is the secreted. The polypeptide is Submandibular gland protein C (Muc19) (Mus musculus (Mouse)).